The chain runs to 473 residues: H(+)/Cl(-) exchange transporter ClcA (473 aa).

At 1 to 32 (MKTDTSTFLAQQIVRLRRRDQIRRLMQRDKTP) the chain is on the cytoplasmic side. A helical membrane pass occupies residues 33-69 (LAILFMAAVVGTLTGLVGVAFEKTVSWVQNMRIGALV). The Periplasmic portion of the chain corresponds to 70–76 (QVADHAF). The helical transmembrane segment at 77–100 (LLWPLAFILSALLAMVGYFLVRKF) threads the bilayer. The Selectivity filter part_1 signature appears at 106 to 110 (GSGIP). Chloride is bound at residue serine 107. The helical intramembrane region spans 109–116 (IPEIEGAL). Residues 117–123 (EELRPVR) are Cytoplasmic-facing. 2 helical membrane-spanning segments follow: residues 124-141 (WWRVLPVKFIGGMGTLGA) and 148-166 (EGPTVQIGGNLGRMVLDVF). The Selectivity filter part_2 motif lies at 146-150 (GREGP). The Cytoplasmic portion of the chain corresponds to 167–176 (RMRSAEARHT). 2 consecutive intramembrane regions (helical) follow at residues 177-189 (LLATGAAAGLSAA) and 193-201 (PLAGILFII). Residues 202–214 (EEMRPQFRYNLIS) are Cytoplasmic-facing. The chain crosses the membrane as a helical span at residues 215 to 232 (IKAVFTGVIMSSIVFRIF). Topologically, residues 233 to 252 (NGEAPIIEVGKLSDAPVNTL) are periplasmic. A helical membrane pass occupies residues 253-281 (WLYLILGIIFGCVGPVFNSLVLRTQDMFQ). The Cytoplasmic portion of the chain corresponds to 282–287 (RFHGGE). A helical membrane pass occupies residues 288–309 (IKKWVLMGGAIGGLCGILGLIE). At 310 to 329 (PAAAGGGFNLIPIAAAGNFS) the chain is on the periplasmic side. The next 2 membrane-spanning stretches (helical) occupy residues 330–349 (VGLLLFIFITRVVTTLLCFS) and 355–376 (GIFAPMLALGTLLGTAFGMAAA). The short motif at 355–359 (GIFAP) is the Selectivity filter part_3 element. Residues isoleucine 356 and phenylalanine 357 each contribute to the chloride site. At 377 to 386 (VLFPQYHPEA) the chain is on the periplasmic side. The segment at residues 387–401 (GTFAIAGMGALMAAS) is an intramembrane region (helical). The note=Loop between two helices intramembrane region spans 402–404 (VRA). An intramembrane region (helical) is located at residues 405–416 (PLTGIVLVLEMT). An intramembrane region (note=Loop between two helices) is located at residues 417 to 421 (DNYQL). A helical transmembrane segment spans residues 422–438 (ILPMIITCLGATLLAQF). Residues 439 to 473 (LGGKPLYSTILARTLAKQDAEQAAKNQNAPAGENT) lie on the Cytoplasmic side of the membrane. Tyrosine 445 lines the chloride pocket.

It belongs to the chloride channel (TC 2.A.49) family. ClcA subfamily. In terms of assembly, homodimer.

Its subcellular location is the cell inner membrane. The enzyme catalyses 2 chloride(in) + H(+)(out) = 2 chloride(out) + H(+)(in). Its function is as follows. Proton-coupled chloride transporter. Functions as antiport system and exchanges two chloride ions for 1 proton. Probably acts as an electrical shunt for an outwardly-directed proton pump that is linked to amino acid decarboxylation, as part of the extreme acid resistance (XAR) response. This Salmonella paratyphi A (strain AKU_12601) protein is H(+)/Cl(-) exchange transporter ClcA.